The sequence spans 402 residues: GTPase HflX (402 aa).

Positions 181-350 (DTVGLIGYTN…MIIEHLNLSI (170 aa)) constitute a Hflx-type G domain. Residues 187–194 (GYTNAGKT), 212–216 (FTTLT), 233–236 (DTVG), 300–303 (NKVD), and 328–330 (SAK) each bind GTP. Positions 194 and 214 each coordinate Mg(2+).

Belongs to the TRAFAC class OBG-HflX-like GTPase superfamily. HflX GTPase family. In terms of assembly, monomer. Associates with the 50S ribosomal subunit. It depends on Mg(2+) as a cofactor.

It is found in the cytoplasm. Functionally, GTPase that associates with the 50S ribosomal subunit and may have a role during protein synthesis or ribosome biogenesis. The chain is GTPase HflX from Methanocaldococcus jannaschii (strain ATCC 43067 / DSM 2661 / JAL-1 / JCM 10045 / NBRC 100440) (Methanococcus jannaschii).